Here is a 403-residue protein sequence, read N- to C-terminus: uncharacterized protein (403 aa).

6 helical membrane-spanning segments follow: residues 31–51 (FLIATIIGPLIIIALAIIGSF), 186–206 (LPIGFVFLLYMAISSLSGIIV), 238–258 (ISAVGLLQIGIWVLFALPIII), 268–288 (LAIFALIYFVLGYLFYSSLLC), 303–323 (LISPIIIIQIIPIMFMNTIMV), and 355–375 (LIEIVLSTAIMIVSIVISFIL).

The protein to B.subtilis YhaP.

It is found in the cell membrane. This is an uncharacterized protein from Methanocaldococcus jannaschii (strain ATCC 43067 / DSM 2661 / JAL-1 / JCM 10045 / NBRC 100440) (Methanococcus jannaschii).